A 79-amino-acid polypeptide reads, in one-letter code: Small ribosomal subunit protein uS17 (79 aa).

Belongs to the universal ribosomal protein uS17 family. In terms of assembly, part of the 30S ribosomal subunit.

In terms of biological role, one of the primary rRNA binding proteins, it binds specifically to the 5'-end of 16S ribosomal RNA. The protein is Small ribosomal subunit protein uS17 of Rhizobium etli (strain ATCC 51251 / DSM 11541 / JCM 21823 / NBRC 15573 / CFN 42).